The primary structure comprises 505 residues: Probable Xaa-Pro aminopeptidase Pc16g13390 (505 aa).

The Mn(2+) site is built by Asp287, Asp298, Glu436, and Glu475.

Belongs to the peptidase M24B family. Mn(2+) is required as a cofactor.

The catalysed reaction is Release of any N-terminal amino acid, including proline, that is linked to proline, even from a dipeptide or tripeptide.. Its function is as follows. Catalyzes the removal of a penultimate prolyl residue from the N-termini of peptides. The sequence is that of Probable Xaa-Pro aminopeptidase Pc16g13390 from Penicillium rubens (strain ATCC 28089 / DSM 1075 / NRRL 1951 / Wisconsin 54-1255) (Penicillium chrysogenum).